We begin with the raw amino-acid sequence, 514 residues long: Probable WRKY transcription factor 4 (514 aa).

3 disordered regions span residues 1-28, 175-204, and 278-394; these read MSEK…PPRP, QPQT…PLPA, and YKGQ…TVTE. Composition is skewed to polar residues over residues 185-198 and 286-299; these read QVQS…QIPT and PPQN…DNTA. The WRKY 1 DNA-binding region spans 223–287; that stretch reads NVDKPADDGY…YKGQHNHEPP (65 aa). Low complexity predominate over residues 300-313; that stretch reads NINGSSINNNRGSS. Over residues 315–326 the composition is skewed to polar residues; it reads LGASQFQTNSSN. Residues 359–380 show a composition bias toward basic and acidic residues; sequence TDVREKDENEPDPKRRSTEVRI. Residues 403–468 constitute a DNA-binding region (WRKY 2); sequence SEVDLLDDGY…YEGKHNHDLP (66 aa). Residues Cys-434, Thr-436, Cys-439, His-463, and His-465 each coordinate Zn(2+). Residues 464–514 are disordered; the sequence is NHDLPAAKSSSHAAAAAQLRPDNRPGGLANLNQQQQQQPVARLRLKEEQTT. A compositionally biased stretch (low complexity) spans 469-480; the sequence is AAKSSSHAAAAA.

In terms of tissue distribution, in young, mature and senescent leaves.

The protein localises to the nucleus. In terms of biological role, transcription factor that binds specifically to the W box (5'-(T)TGAC[CT]-3'), a frequently occurring elicitor-responsive cis-acting element. Has a positive role in resistance to necrotrophic pathogens (e.g. Botrytis cinerea), but a negative effect on plant resistance to biotrophic pathogens (e.g. Pseudomonas syringae). In Arabidopsis thaliana (Mouse-ear cress), this protein is Probable WRKY transcription factor 4 (WRKY4).